The following is a 139-amino-acid chain: Hydrogenase maturation factor HypA (139 aa).

Position 2 (His2) interacts with Ni(2+). Zn(2+) is bound by residues Cys73, Cys76, Cys110, and Cys113.

This sequence belongs to the HypA/HybF family.

Its function is as follows. Involved in the maturation of [NiFe] hydrogenases. Required for nickel insertion into the metal center of the hydrogenase. This chain is Hydrogenase maturation factor HypA, found in Pyrococcus abyssi (strain GE5 / Orsay).